A 239-amino-acid polypeptide reads, in one-letter code: Large ribosomal subunit protein mL67 (239 aa).

It belongs to the mitochondrion-specific ribosomal protein mL67 family. In terms of assembly, component of the mitochondrial large ribosomal subunit (mt-LSU).

The protein localises to the nucleus. It is found in the mitochondrion. Component of the mitochondrial ribosome (mitoribosome), a dedicated translation machinery responsible for the synthesis of mitochondrial genome-encoded proteins, including at least some of the essential transmembrane subunits of the mitochondrial respiratory chain. The mitoribosomes are attached to the mitochondrial inner membrane and translation products are cotranslationally integrated into the membrane. mL67/MHR1 also has extraribosomal functions, being involved in regulation of mitochondrial DNA recombination, maintenance and repair, and generation of homoplasmic cells. mL67/MHR1 also acts as transcription factor involved in regulation of RNA polymerase II-dependent transcription. This Candida albicans (strain SC5314 / ATCC MYA-2876) (Yeast) protein is Large ribosomal subunit protein mL67 (MHR1).